Here is a 260-residue protein sequence, read N- to C-terminus: Thiazole synthase (260 aa).

K102 acts as the Schiff-base intermediate with DXP in catalysis. 1-deoxy-D-xylulose 5-phosphate is bound by residues G163, 189–190 (AG), and 211–212 (NT).

It belongs to the ThiG family. Homotetramer. Forms heterodimers with either ThiH or ThiS.

It localises to the cytoplasm. The enzyme catalyses [ThiS sulfur-carrier protein]-C-terminal-Gly-aminoethanethioate + 2-iminoacetate + 1-deoxy-D-xylulose 5-phosphate = [ThiS sulfur-carrier protein]-C-terminal Gly-Gly + 2-[(2R,5Z)-2-carboxy-4-methylthiazol-5(2H)-ylidene]ethyl phosphate + 2 H2O + H(+). It participates in cofactor biosynthesis; thiamine diphosphate biosynthesis. Its function is as follows. Catalyzes the rearrangement of 1-deoxy-D-xylulose 5-phosphate (DXP) to produce the thiazole phosphate moiety of thiamine. Sulfur is provided by the thiocarboxylate moiety of the carrier protein ThiS. In vitro, sulfur can be provided by H(2)S. This Geobacter sulfurreducens (strain ATCC 51573 / DSM 12127 / PCA) protein is Thiazole synthase.